A 204-amino-acid chain; its full sequence is MDFNQYFLPLFQGEASLIINKKVEEFKLFDRKNKDALFEELCFCILAANTSARMALDMQNRIGKGFLYLSENELREKLKAFKYRFYNVRPRYIVESRDIVDELPYIVSMDNKEEARDLLVENVYGFGYKEASHFLRNVGVFDFAILDKHILEWLSRYFQVKKNTSRKNYLYNESIFREIAKSVGMEPGVLDLYIWYMETGTVIK.

Catalysis depends on residues K129 and D147.

This sequence belongs to the type-2 OGG1 family.

It carries out the reaction 2'-deoxyribonucleotide-(2'-deoxyribose 5'-phosphate)-2'-deoxyribonucleotide-DNA = a 3'-end 2'-deoxyribonucleotide-(2,3-dehydro-2,3-deoxyribose 5'-phosphate)-DNA + a 5'-end 5'-phospho-2'-deoxyribonucleoside-DNA + H(+). Functionally, catalyzes the excision of an oxidatively damaged form of guanine (7,8-dihydro-8-oxoguanine = 8-oxoG) from DNA. Also cleaves the DNA backbone at apurinic/apyrimidinic sites (AP sites). Prefers oligomers containing 8-oxoG:C, 8-oxoG:T and 8-oxoG:G base pairs, and is less effective on oligomers containing 8-oxoG:A mispairs. This chain is 8-oxoguanine DNA glycosylase/AP lyase, found in Thermoplasma volcanium (strain ATCC 51530 / DSM 4299 / JCM 9571 / NBRC 15438 / GSS1).